Reading from the N-terminus, the 279-residue chain is Orotidine 5'-phosphate decarboxylase (279 aa).

Residues D8, K30, 58–67 (DLKIHDIPNT), T117, R177, Q186, G206, and R207 contribute to the substrate site. K60 (proton donor) is an active-site residue.

The protein belongs to the OMP decarboxylase family. Type 1 subfamily. Homodimer.

The catalysed reaction is orotidine 5'-phosphate + H(+) = UMP + CO2. Its pathway is pyrimidine metabolism; UMP biosynthesis via de novo pathway; UMP from orotate: step 2/2. Its function is as follows. Catalyzes the decarboxylation of orotidine 5'-monophosphate (OMP) to uridine 5'-monophosphate (UMP). This chain is Orotidine 5'-phosphate decarboxylase, found in Campylobacter jejuni (strain RM1221).